Here is a 51-residue protein sequence, read N- to C-terminus: uncharacterized protein (51 aa).

This is an uncharacterized protein from Treponema pallidum (strain Nichols).